We begin with the raw amino-acid sequence, 177 residues long: N-acetylmuramoyl-L-alanine amidase A (177 aa).

Residues 23–158 (QTSAVIMHTM…SGNENRYDPG (136 aa)) enclose the N-acetylmuramoyl-L-alanine amidase domain. Cysteine 114 and cysteine 121 are joined by a disulfide.

It localises to the secreted. It carries out the reaction Hydrolyzes the link between N-acetylmuramoyl residues and L-amino acid residues in certain cell-wall glycopeptides.. Its function is as follows. Antibacterial activity against Gram-positive bacteria M.luteus, S.aureus, E.faecalis and P.acidilactici and Gram-negative bacterium E.coli. The protein is N-acetylmuramoyl-L-alanine amidase A (cwhA) of Achromobacter lyticus.